A 63-amino-acid polypeptide reads, in one-letter code: Large ribosomal subunit protein uL29 (63 aa).

Belongs to the universal ribosomal protein uL29 family.

This Actinobacillus succinogenes (strain ATCC 55618 / DSM 22257 / CCUG 43843 / 130Z) protein is Large ribosomal subunit protein uL29.